The chain runs to 350 residues: MFIVAVLMLAFLIFVHELGHFIIARICGVKVEVFSIGFGKKLWFFKLFGTQFALSLIPLGGYVKLKGMDKEENEENKINQANDSYAQKSPFQKLWILFGGAFFNFLFAVLVYFFLALSGEKVLLPVIGGLEKNALEAGLLKGDRILSINHQKIASFREIREIVARSQGELILEIERNNQILEKRLTPKIVAVISESNDPNEIIKYKIIGIKPDMQKMGVVSYSVFQAFEKALSRFKEGVVLIVDSLRRLIMGSASVKELSGVIGIVGALSHANSVSMLLLFGAFLSINLGILNLLPIPALDGAQMLGVVFKNIFHIALPTPIQNALWLVGVGFLVFVMFLGLFNDITRLL.

H16 provides a ligand contact to Zn(2+). The active site involves E17. Zn(2+) is bound at residue H20. 5 consecutive transmembrane segments (helical) span residues 43–63 (WFFK…GGYV), 94–114 (LWIL…VYFF), 249–269 (LIMG…VGAL), 277–297 (MLLL…LLPI), and 326–346 (LWLV…FNDI). The 70-residue stretch at 108-177 (AVLVYFFLAL…GELILEIERN (70 aa)) folds into the PDZ domain.

The protein belongs to the peptidase M50B family. Requires Zn(2+) as cofactor.

Its subcellular location is the cell inner membrane. This chain is Putative zinc metalloprotease jhp_0242, found in Helicobacter pylori (strain J99 / ATCC 700824) (Campylobacter pylori J99).